The chain runs to 174 residues: Ribosome maturation factor RimP (174 aa).

This sequence belongs to the RimP family.

It localises to the cytoplasm. Functionally, required for maturation of 30S ribosomal subunits. The polypeptide is Ribosome maturation factor RimP (Acinetobacter baumannii (strain AB307-0294)).